We begin with the raw amino-acid sequence, 1235 residues long: ATP-dependent helicase/nuclease subunit A (1235 aa).

A UvrD-like helicase ATP-binding domain is found at 3–471 (TKWTETQKSA…IKLSENFRSR (469 aa)). ATP is bound at residue 24–31 (AGAGTGKT). The 300-residue stretch at 509–808 (PFEGNCGGDV…RIMSIHKSKG (300 aa)) folds into the UvrD-like helicase C-terminal domain.

Belongs to the helicase family. AddA subfamily. In terms of assembly, heterodimer of AddA and AddB/RexB. The cofactor is Mg(2+).

The catalysed reaction is Couples ATP hydrolysis with the unwinding of duplex DNA by translocating in the 3'-5' direction.. It carries out the reaction ATP + H2O = ADP + phosphate + H(+). The heterodimer acts as both an ATP-dependent DNA helicase and an ATP-dependent, dual-direction single-stranded exonuclease. Recognizes the chi site generating a DNA molecule suitable for the initiation of homologous recombination. The AddA nuclease domain is required for chi fragment generation; this subunit has the helicase and 3' -&gt; 5' nuclease activities. In Clostridium kluyveri (strain ATCC 8527 / DSM 555 / NBRC 12016 / NCIMB 10680 / K1), this protein is ATP-dependent helicase/nuclease subunit A.